The following is a 291-amino-acid chain: Glutamate racemase (291 aa).

Substrate contacts are provided by residues 12–13 (DS) and 44–45 (YG). Residue Cys-75 is the Proton donor/acceptor of the active site. 76–77 (NT) is a substrate binding site. The Proton donor/acceptor role is filled by Cys-187. 188 to 189 (TH) lines the substrate pocket. A compositionally biased stretch (low complexity) spans 234-247 (ATQAAGARAQMAPS). Residues 234–257 (ATQAAGARAQMAPSAPEPKEGTPD) are disordered.

It belongs to the aspartate/glutamate racemases family.

It catalyses the reaction L-glutamate = D-glutamate. It functions in the pathway cell wall biogenesis; peptidoglycan biosynthesis. Functionally, provides the (R)-glutamate required for cell wall biosynthesis. The protein is Glutamate racemase of Koribacter versatilis (strain Ellin345).